Consider the following 101-residue polypeptide: CRISPR-associated endoribonuclease Cas2 (101 aa).

D8 lines the Mg(2+) pocket.

It belongs to the CRISPR-associated endoribonuclease Cas2 protein family. As to quaternary structure, homodimer, forms a heterotetramer with a Cas1 homodimer. Requires Mg(2+) as cofactor.

Its function is as follows. CRISPR (clustered regularly interspaced short palindromic repeat), is an adaptive immune system that provides protection against mobile genetic elements (viruses, transposable elements and conjugative plasmids). CRISPR clusters contain sequences complementary to antecedent mobile elements and target invading nucleic acids. CRISPR clusters are transcribed and processed into CRISPR RNA (crRNA). Functions as a ssRNA-specific endoribonuclease. Involved in the integration of spacer DNA into the CRISPR cassette. The sequence is that of CRISPR-associated endoribonuclease Cas2 from Treponema denticola (strain ATCC 35405 / DSM 14222 / CIP 103919 / JCM 8153 / KCTC 15104).